Consider the following 485-residue polypeptide: Rhamnulokinase (485 aa).

11–15 (ASSGR) is an ATP binding site. Residues A79 and 234 to 236 (HDT) contribute to the substrate site. The Proton acceptor role is filled by D235. T257 contacts ATP. Residue N294 participates in substrate binding. ATP is bound by residues Q302 and G401.

This sequence belongs to the rhamnulokinase family. The cofactor is Mg(2+).

The catalysed reaction is L-rhamnulose + ATP = L-rhamnulose 1-phosphate + ADP + H(+). Its pathway is carbohydrate degradation; L-rhamnose degradation; glycerone phosphate from L-rhamnose: step 2/3. Involved in the catabolism of L-rhamnose (6-deoxy-L-mannose). Catalyzes the transfer of the gamma-phosphate group from ATP to the 1-hydroxyl group of L-rhamnulose to yield L-rhamnulose 1-phosphate. The protein is Rhamnulokinase of Ligilactobacillus salivarius (strain UCC118) (Lactobacillus salivarius).